The primary structure comprises 135 residues: MVPAPPFLGVLENPVPQWDLSILGSIRIRVSHTEVQGSGSSRSPEALRKESLEVEWTLVLLAIPPRIQPSQQDGGPPKCCDLLRAALLGRHCPLCVPAGEVFSQKRDNEQDRSEFIGQTLKLLVKRNVSLELSCR.

This is an uncharacterized protein from Homo sapiens (Human).